Here is a 137-residue protein sequence, read N- to C-terminus: Putative pre-16S rRNA nuclease (137 aa).

It belongs to the YqgF nuclease family.

Its subcellular location is the cytoplasm. Its function is as follows. Could be a nuclease involved in processing of the 5'-end of pre-16S rRNA. This chain is Putative pre-16S rRNA nuclease, found in Clostridium kluyveri (strain NBRC 12016).